Here is a 147-residue protein sequence, read N- to C-terminus: Large ribosomal subunit protein bL9 (147 aa).

Belongs to the bacterial ribosomal protein bL9 family.

Its function is as follows. Binds to the 23S rRNA. The sequence is that of Large ribosomal subunit protein bL9 from Exiguobacterium sp. (strain ATCC BAA-1283 / AT1b).